Here is a 303-residue protein sequence, read N- to C-terminus: E3 ubiquitin-protein ligase CCNB1IP1 homolog (303 aa).

An RING-type; degenerate zinc finger spans residues 3-42 (CNACWRELEGQAVSTTCGHLLCTEDAKKILSNDAACPICD). Positions 119-184 (LEEVHTAYQK…YESAKRSAIQ (66 aa)) form a coiled coil. Positions 201-268 (VPNIMDSSDP…DIRPRQPARP (68 aa)) are disordered.

In terms of assembly, interacts with ZIP4 and PTD. In terms of tissue distribution, expressed in young panicles.

It is found in the nucleus. It localises to the chromosome. It catalyses the reaction S-ubiquitinyl-[E2 ubiquitin-conjugating enzyme]-L-cysteine + [acceptor protein]-L-lysine = [E2 ubiquitin-conjugating enzyme]-L-cysteine + N(6)-ubiquitinyl-[acceptor protein]-L-lysine.. The protein operates within protein modification; protein ubiquitination. In terms of biological role, ubiquitin E3 ligase required for class I crossover (CO) formation during meiosis. The polypeptide is E3 ubiquitin-protein ligase CCNB1IP1 homolog (Oryza sativa subsp. japonica (Rice)).